Reading from the N-terminus, the 574-residue chain is Optineurin (574 aa).

The tract at residues 1–33 (MSHQPLSCLTEKGDSPTETTGNGPPTLAHPNLD) is disordered. Residues 38-170 (HELLQQMREL…VSELQLKLNS (133 aa)) are a coiled coil. Positions 58–209 (MKLNNQAMKG…GPIRTDSIDT (152 aa)) are interaction with Rab8. Residues 176–181 (DSFVEI) carry the LIR motif. S177 carries the phosphoserine; by TBK1 modification. S198 is subject to Phosphoserine. Residues 233-496 (CLREGNQKVE…ALQLAVLLKD (264 aa)) adopt a coiled-coil conformation. Basic and acidic residues predominate over residues 262 to 286 (AKDRSETETQTEEHKEQEKEEEKSP). The segment at 262–292 (AKDRSETETQTEEHKEQEKEEEKSPETVGSE) is disordered. The residue at position 336 (S336) is a Phosphoserine. The segment at 405–574 (KRRESEKVDK…LLIHVTDCII (170 aa)) is interaction with HD. An interaction with MYO6 region spans residues 406–515 (RRESEKVDKV…RQSLMEMQSR (110 aa)). The UBAN motif lies at 468–473 (DFHAER). S521 carries the phosphoserine modification. A CCHC NOA-type zinc finger spans residues 544–574 (QQNIPIHSCPKCGEVLPDIDTLLIHVTDCII). Positions 552, 555, 568, and 572 each coordinate Zn(2+).

In terms of assembly, self-associates. Interacts with HD. Interacts with GTF3A. Interacts with MYO6. Interacts (via UBAN) with ubiquitinated TFRC. Interacts with GTP-bound Rab8 (RAB8A and/or RAB8B). Interacts with TBC1D17. Interacts with TBK1. Interacts with TRAF3. Binds to linear ubiquitin chains. Interacts with LC3 family members MAP1LC3A, MAP1LC3B, GABARAP, GABARAPL1 and GABARAPL2; OPTN phosphorylation increases the association (at least with MAP1LC3B). Interacts with RAB12; the interaction may be indirect. Interacts with TBK1; this interaction leads to the Golgi localization of TBK1 and its subsequent activation. Interacts with palmitoyltransferase ZDHHC17/HIP14; the interaction does not lead to palmitoylation of OPTN. Interacts with CYLD. Interacts with TOM1; the interaction is indirect and is mediated by MYO6, which acts as a bridge between TOM1 and OPTN. Interacts with USP12; the interaction is independent of USP12 deubiquitinase activity and may be involved in regulation of autophagic flux. In terms of processing, phosphorylated by TBK1, leading to restrict bacterial proliferation in case of infection. Present in aqueous humor of the eye (at protein level). Expressed in trabecular meshwork and astrocytes.

It localises to the cytoplasm. Its subcellular location is the perinuclear region. The protein resides in the golgi apparatus. The protein localises to the trans-Golgi network. It is found in the cytoplasmic vesicle. It localises to the autophagosome. Its subcellular location is the recycling endosome. Functionally, plays an important role in the maintenance of the Golgi complex, in membrane trafficking, in exocytosis, through its interaction with myosin VI and Rab8. Links myosin VI to the Golgi complex and plays an important role in Golgi ribbon formation. Negatively regulates the induction of IFNB in response to RNA virus infection. Plays a neuroprotective role in the eye and optic nerve. Probably part of the TNF-alpha signaling pathway that can shift the equilibrium toward induction of cell death. May act by regulating membrane trafficking and cellular morphogenesis via a complex that contains Rab8 and huntingtin (HD). Mediates the interaction of Rab8 with the probable GTPase-activating protein TBC1D17 during Rab8-mediated endocytic trafficking, such as that of transferrin receptor (TFRC/TfR); regulates Rab8 recruitment to tubules emanating from the endocytic recycling compartment. Autophagy receptor that interacts directly with both the cargo to become degraded and an autophagy modifier of the MAP1 LC3 family; targets ubiquitin-coated bacteria (xenophagy) and appears to function in the same pathway as SQSTM1 and CALCOCO2/NDP52. The chain is Optineurin (OPTN) from Sus scrofa (Pig).